The primary structure comprises 614 residues: Glutamine--fructose-6-phosphate aminotransferase [isomerizing] (614 aa).

The active-site Nucleophile; for GATase activity is the cysteine 2. One can recognise a Glutamine amidotransferase type-2 domain in the interval 2–223 (CGIIGYIGRR…DGEMAVVTRD (222 aa)). SIS domains lie at 292 to 431 (YLDR…GRTI) and 463 to 604 (IAVK…VDRP). The active-site For Fru-6P isomerization activity is lysine 609.

Homodimer.

Its subcellular location is the cytoplasm. The catalysed reaction is D-fructose 6-phosphate + L-glutamine = D-glucosamine 6-phosphate + L-glutamate. Functionally, catalyzes the first step in hexosamine metabolism, converting fructose-6P into glucosamine-6P using glutamine as a nitrogen source. The protein is Glutamine--fructose-6-phosphate aminotransferase [isomerizing] of Chlorobaculum tepidum (strain ATCC 49652 / DSM 12025 / NBRC 103806 / TLS) (Chlorobium tepidum).